A 376-amino-acid chain; its full sequence is Bifunctional enzyme IspD/IspF (376 aa).

Positions 1–220 are 2-C-methyl-D-erythritol 4-phosphate cytidylyltransferase; that stretch reads MRIAAILVAG…RSMSISMIPR (220 aa). The interval 220–376 is 2-C-methyl-D-erythritol 2,4-cyclodiphosphate synthase; the sequence is RIGTGYDVHA…QAAVIIMIPA (157 aa). The a divalent metal cation site is built by aspartate 226 and histidine 228. 4-CDP-2-C-methyl-D-erythritol 2-phosphate-binding positions include 226–228 and 252–253; these read DVH and HS. Position 260 (histidine 260) interacts with a divalent metal cation. 4-CDP-2-C-methyl-D-erythritol 2-phosphate-binding positions include 274–276, 350–353, phenylalanine 357, and arginine 360; these read DIG and TTSE.

In the N-terminal section; belongs to the IspD/TarI cytidylyltransferase family. IspD subfamily. The protein in the C-terminal section; belongs to the IspF family. Requires a divalent metal cation as cofactor.

The enzyme catalyses 2-C-methyl-D-erythritol 4-phosphate + CTP + H(+) = 4-CDP-2-C-methyl-D-erythritol + diphosphate. It catalyses the reaction 4-CDP-2-C-methyl-D-erythritol 2-phosphate = 2-C-methyl-D-erythritol 2,4-cyclic diphosphate + CMP. It participates in isoprenoid biosynthesis; isopentenyl diphosphate biosynthesis via DXP pathway; isopentenyl diphosphate from 1-deoxy-D-xylulose 5-phosphate: step 2/6. The protein operates within isoprenoid biosynthesis; isopentenyl diphosphate biosynthesis via DXP pathway; isopentenyl diphosphate from 1-deoxy-D-xylulose 5-phosphate: step 4/6. Functionally, bifunctional enzyme that catalyzes the formation of 4-diphosphocytidyl-2-C-methyl-D-erythritol from CTP and 2-C-methyl-D-erythritol 4-phosphate (MEP) (IspD), and catalyzes the conversion of 4-diphosphocytidyl-2-C-methyl-D-erythritol 2-phosphate (CDP-ME2P) to 2-C-methyl-D-erythritol 2,4-cyclodiphosphate (ME-CPP) with a corresponding release of cytidine 5-monophosphate (CMP) (IspF). This chain is Bifunctional enzyme IspD/IspF, found in Granulibacter bethesdensis (strain ATCC BAA-1260 / CGDNIH1).